Reading from the N-terminus, the 421-residue chain is Gamma-glutamyl phosphate reductase (421 aa).

The protein belongs to the gamma-glutamyl phosphate reductase family.

The protein localises to the cytoplasm. The enzyme catalyses L-glutamate 5-semialdehyde + phosphate + NADP(+) = L-glutamyl 5-phosphate + NADPH + H(+). Its pathway is amino-acid biosynthesis; L-proline biosynthesis; L-glutamate 5-semialdehyde from L-glutamate: step 2/2. Catalyzes the NADPH-dependent reduction of L-glutamate 5-phosphate into L-glutamate 5-semialdehyde and phosphate. The product spontaneously undergoes cyclization to form 1-pyrroline-5-carboxylate. The chain is Gamma-glutamyl phosphate reductase from Brucella melitensis biotype 1 (strain ATCC 23456 / CCUG 17765 / NCTC 10094 / 16M).